Reading from the N-terminus, the 65-residue chain is Putative antitoxin MJECL31 (65 aa).

Belongs to the UPF0165 family.

Functionally, possibly the antitoxin component of a type II toxin-antitoxin (TA) system. The sequence is that of Putative antitoxin MJECL31 from Methanocaldococcus jannaschii (strain ATCC 43067 / DSM 2661 / JAL-1 / JCM 10045 / NBRC 100440) (Methanococcus jannaschii).